Reading from the N-terminus, the 507-residue chain is ATP synthase subunit alpha, chloroplastic (507 aa).

170–177 contributes to the ATP binding site; sequence GDRQTGKT.

This sequence belongs to the ATPase alpha/beta chains family. F-type ATPases have 2 components, CF(1) - the catalytic core - and CF(0) - the membrane proton channel. CF(1) has five subunits: alpha(3), beta(3), gamma(1), delta(1), epsilon(1). CF(0) has four main subunits: a, b, b' and c.

The protein localises to the plastid. The protein resides in the chloroplast thylakoid membrane. The enzyme catalyses ATP + H2O + 4 H(+)(in) = ADP + phosphate + 5 H(+)(out). Its function is as follows. Produces ATP from ADP in the presence of a proton gradient across the membrane. The alpha chain is a regulatory subunit. The protein is ATP synthase subunit alpha, chloroplastic of Ranunculus macranthus (Large buttercup).